The chain runs to 219 residues: 7-cyano-7-deazaguanine synthase (219 aa).

ATP is bound at residue 10-20; sequence FSGGQDSTTCL. Zn(2+) contacts are provided by Cys188, Cys197, Cys200, and Cys203.

It belongs to the QueC family. In terms of assembly, homodimer. The cofactor is Zn(2+).

The enzyme catalyses 7-carboxy-7-deazaguanine + NH4(+) + ATP = 7-cyano-7-deazaguanine + ADP + phosphate + H2O + H(+). The protein operates within purine metabolism; 7-cyano-7-deazaguanine biosynthesis. In terms of biological role, catalyzes the ATP-dependent conversion of 7-carboxy-7-deazaguanine (CDG) to 7-cyano-7-deazaguanine (preQ(0)). The protein is 7-cyano-7-deazaguanine synthase of Clostridium botulinum (strain 657 / Type Ba4).